The primary structure comprises 66 residues: Large ribosomal subunit protein bL33c (66 aa).

The protein belongs to the bacterial ribosomal protein bL33 family.

The protein localises to the plastid. The protein resides in the chloroplast. This Gossypium barbadense (Sea Island cotton) protein is Large ribosomal subunit protein bL33c.